The following is a 370-amino-acid chain: Asporin (370 aa).

An N-terminal signal peptide occupies residues M1–A15. O-linked (GalNAc...) serine glycosylation is present at S45. An LRRNT domain is found at F56–F92. 2 disulfide bridges follow: C65–C71 and C69–C78. 11 LRR repeats span residues D93 to G114, S117 to T138, K141 to L163, A164 to G183, A186 to G209, T232 to R253, D256 to N277, R280 to K302, Y303 to P324, S332 to F354, and R355 to K370. Residue N272 is glycosylated (N-linked (GlcNAc...) asparagine). A disulfide bridge connects residues C323 and C356.

This sequence belongs to the small leucine-rich proteoglycan (SLRP) family. SLRP class I subfamily.

It is found in the secreted. The protein resides in the extracellular space. Its subcellular location is the extracellular matrix. In Bos taurus (Bovine), this protein is Asporin (ASPN).